Here is a 210-residue protein sequence, read N- to C-terminus: Redox-sensing transcriptional repressor Rex (210 aa).

Residues 15–54 (LYYRIFKRFNTDGIEKASSKQIADALGIDSATVRRDFSYF) constitute a DNA-binding region (H-T-H motif). 89 to 94 (GCGNIG) contributes to the NAD(+) binding site.

The protein belongs to the transcriptional regulatory Rex family. Homodimer.

Its subcellular location is the cytoplasm. Functionally, modulates transcription in response to changes in cellular NADH/NAD(+) redox state. In Streptococcus agalactiae serotype Ia (strain ATCC 27591 / A909 / CDC SS700), this protein is Redox-sensing transcriptional repressor Rex.